Reading from the N-terminus, the 126-residue chain is CLLILGLVLEQLQVEGKSCCRSTLGRNCYNLCRARGAQKLCAGVCRCKISSGLSCPKGFPKLALESNSDEPDTIEYCNLGCRSSVCDYMVNAAADDEEMKLYVENCADACVSFCNGDAGLPSLDAY.

An N-terminal signal peptide occupies residues 1–16; sequence CLLILGLVLEQLQVEG. 4 disulfide bridges follow: Cys-19–Cys-55, Cys-20–Cys-47, Cys-28–Cys-45, and Cys-32–Cys-41. Residues 62–126 constitute a propeptide, acidic domain; that stretch reads LALESNSDEP…DAGLPSLDAY (65 aa).

This sequence belongs to the plant thionin (TC 1.C.44) family. 4 C-C subfamily.

The protein resides in the secreted. In terms of biological role, thionins are small plant proteins which are toxic to animal cells. They seem to exert their toxic effect at the level of the cell membrane. Their precise function is not known. The chain is Alpha-1-purothionin (THI1.1) from Triticum aestivum (Wheat).